The sequence spans 441 residues: Ribosomal protein uS12 methylthiotransferase RimO (441 aa).

In terms of domain architecture, MTTase N-terminal spans 8–118 (PKIGFVSLGC…VLQHVHHYVP (111 aa)). Residues cysteine 17, cysteine 53, cysteine 82, cysteine 150, cysteine 154, and cysteine 157 each coordinate [4Fe-4S] cluster. The Radical SAM core domain maps to 136–373 (LTPRHYAYLK…MQLQQQISAE (238 aa)). The TRAM domain maps to 376-441 (QEKVGREILV…DEYDLWGSRV (66 aa)).

It belongs to the methylthiotransferase family. RimO subfamily. [4Fe-4S] cluster serves as cofactor.

It is found in the cytoplasm. It carries out the reaction L-aspartate(89)-[ribosomal protein uS12]-hydrogen + (sulfur carrier)-SH + AH2 + 2 S-adenosyl-L-methionine = 3-methylsulfanyl-L-aspartate(89)-[ribosomal protein uS12]-hydrogen + (sulfur carrier)-H + 5'-deoxyadenosine + L-methionine + A + S-adenosyl-L-homocysteine + 2 H(+). In terms of biological role, catalyzes the methylthiolation of an aspartic acid residue of ribosomal protein uS12. This chain is Ribosomal protein uS12 methylthiotransferase RimO, found in Salmonella arizonae (strain ATCC BAA-731 / CDC346-86 / RSK2980).